Here is a 295-residue protein sequence, read N- to C-terminus: Bifunctional protein FolD (295 aa).

NADP(+) contacts are provided by residues 169-171 (GRS), Ser-194, and Ile-235.

The protein belongs to the tetrahydrofolate dehydrogenase/cyclohydrolase family. Homodimer.

It catalyses the reaction (6R)-5,10-methylene-5,6,7,8-tetrahydrofolate + NADP(+) = (6R)-5,10-methenyltetrahydrofolate + NADPH. It carries out the reaction (6R)-5,10-methenyltetrahydrofolate + H2O = (6R)-10-formyltetrahydrofolate + H(+). The protein operates within one-carbon metabolism; tetrahydrofolate interconversion. Its function is as follows. Catalyzes the oxidation of 5,10-methylenetetrahydrofolate to 5,10-methenyltetrahydrofolate and then the hydrolysis of 5,10-methenyltetrahydrofolate to 10-formyltetrahydrofolate. This is Bifunctional protein FolD from Acaryochloris marina (strain MBIC 11017).